We begin with the raw amino-acid sequence, 86 residues long: Small ribosomal subunit protein bS20 (86 aa).

Residues 1 to 25 are disordered; sequence MANIKSQMKRIKTNEANRQRNKAVK.

It belongs to the bacterial ribosomal protein bS20 family.

In terms of biological role, binds directly to 16S ribosomal RNA. This is Small ribosomal subunit protein bS20 from Saccharopolyspora erythraea (strain ATCC 11635 / DSM 40517 / JCM 4748 / NBRC 13426 / NCIMB 8594 / NRRL 2338).